The following is a 739-amino-acid chain: Lysine decarboxylase (739 aa).

Lysine 367 is subject to N6-(pyridoxal phosphate)lysine. The segment covering 714–726 has biased composition (basic and acidic residues); that stretch reads ADEPGDKPSDTVK. The interval 714 to 739 is disordered; sequence ADEPGDKPSDTVKKAPGKKPSAAKKS. Residues 728–739 show a composition bias toward basic residues; it reads APGKKPSAAKKS.

Belongs to the Orn/Lys/Arg decarboxylase class-I family. Pyridoxal 5'-phosphate is required as a cofactor.

Its subcellular location is the cytoplasm. The enzyme catalyses L-lysine + H(+) = cadaverine + CO2. The protein is Lysine decarboxylase of Hafnia alvei.